The chain runs to 129 residues: UPF0325 protein Ent638_0703 (129 aa).

Belongs to the UPF0325 family.

The polypeptide is UPF0325 protein Ent638_0703 (Enterobacter sp. (strain 638)).